The primary structure comprises 231 residues: Protein N-terminal glutamine amidohydrolase (231 aa).

The segment at 1 to 21 (MADDRVAGGATPPPPPPPPPL) is disordered. The segment covering 11 to 21 (TPPPPPPPPPL) has biased composition (pro residues). Active-site residues include Cys-33, His-89, and Asp-108.

The protein belongs to the NTAQ1 family. In terms of assembly, monomer.

The catalysed reaction is N-terminal L-glutaminyl-[protein] + H2O = N-terminal L-glutamyl-[protein] + NH4(+). In terms of biological role, mediates the side-chain deamidation of N-terminal glutamine residues to glutamate, an important step in N-end rule pathway of protein degradation. Conversion of the resulting N-terminal glutamine to glutamate renders the protein susceptible to arginylation, polyubiquitination and degradation as specified by the N-end rule. Does not act on substrates with internal or C-terminal glutamine and does not act on non-glutamine residues in any position. This Oryza sativa subsp. indica (Rice) protein is Protein N-terminal glutamine amidohydrolase.